Here is a 754-residue protein sequence, read N- to C-terminus: Catalase-peroxidase (754 aa).

A disordered region spans residues 1-29 (MGTQPARKLRNRVFPHPHNHRKEKPMAND). Positions 7 to 23 (RKLRNRVFPHPHNHRKE) are enriched in basic residues. The active-site Tryptophan radical intermediate is the Trp106. Residues 122-249 (WHAAGTYRIA…LAAVQMGLIY (128 aa)) constitute a cross-link (tryptophyl-tyrosyl-methioninium (Trp-Tyr) (with M-275)). His123 (proton acceptor) is an active-site residue. The tryptophyl-tyrosyl-methioninium (Tyr-Met) (with W-122) cross-link spans 249-275 (YVNPEGVDGHPDPLCTAQDVRTTFARM). His290 contacts heme b.

Belongs to the peroxidase family. Peroxidase/catalase subfamily. As to quaternary structure, homodimer. Heme b serves as cofactor. Post-translationally, formation of the three residue Trp-Tyr-Met cross-link is important for the catalase, but not the peroxidase activity of the enzyme.

The enzyme catalyses H2O2 + AH2 = A + 2 H2O. It catalyses the reaction 2 H2O2 = O2 + 2 H2O. In terms of biological role, bifunctional enzyme with both catalase and broad-spectrum peroxidase activity. Also displays NADH oxidase, isoniazid hydrazine lyase and isonicotinoyl-NAD synthase activities. The polypeptide is Catalase-peroxidase (Synechocystis sp. (strain ATCC 27184 / PCC 6803 / Kazusa)).